The sequence spans 141 residues: Aspartate 1-decarboxylase (141 aa).

Ser25 functions as the Schiff-base intermediate with substrate; via pyruvic acid in the catalytic mechanism. Ser25 is subject to Pyruvic acid (Ser). Thr57 is a binding site for substrate. Catalysis depends on Tyr58, which acts as the Proton donor. Residue 73–75 (GAA) coordinates substrate. The disordered stretch occupies residues 121–141 (ASAPVPGSRTERSPQAVVAGG).

It belongs to the PanD family. As to quaternary structure, heterooctamer of four alpha and four beta subunits. Requires pyruvate as cofactor. Is synthesized initially as an inactive proenzyme, which is activated by self-cleavage at a specific serine bond to produce a beta-subunit with a hydroxyl group at its C-terminus and an alpha-subunit with a pyruvoyl group at its N-terminus.

Its subcellular location is the cytoplasm. The enzyme catalyses L-aspartate + H(+) = beta-alanine + CO2. It participates in cofactor biosynthesis; (R)-pantothenate biosynthesis; beta-alanine from L-aspartate: step 1/1. In terms of biological role, catalyzes the pyruvoyl-dependent decarboxylation of aspartate to produce beta-alanine. The polypeptide is Aspartate 1-decarboxylase (Streptomyces griseus subsp. griseus (strain JCM 4626 / CBS 651.72 / NBRC 13350 / KCC S-0626 / ISP 5235)).